Consider the following 309-residue polypeptide: Dihydroorotate dehydrogenase B (NAD(+)), catalytic subunit (309 aa).

FMN is bound by residues Ser-21 and Lys-45–Ala-46. Residues Lys-45 and Asn-69 to Leu-73 contribute to the substrate site. FMN-binding residues include Asn-99 and Asn-127. A substrate-binding site is contributed by Asn-127. Cys-130 acts as the Nucleophile in catalysis. FMN is bound by residues Lys-165 and Ile-191. Asn-192–Thr-193 is a substrate binding site. FMN-binding positions include Gly-217, Gly-243 to Gly-244, and Gly-265 to Thr-266.

This sequence belongs to the dihydroorotate dehydrogenase family. Type 1 subfamily. Heterotetramer of 2 PyrK and 2 PyrD type B subunits. The cofactor is FMN.

Its subcellular location is the cytoplasm. It carries out the reaction (S)-dihydroorotate + NAD(+) = orotate + NADH + H(+). The protein operates within pyrimidine metabolism; UMP biosynthesis via de novo pathway; orotate from (S)-dihydroorotate (NAD(+) route): step 1/1. Functionally, catalyzes the conversion of dihydroorotate to orotate with NAD(+) as electron acceptor. This is Dihydroorotate dehydrogenase B (NAD(+)), catalytic subunit (pyrD) from Bacillus cereus (strain B4264).